The following is a 308-amino-acid chain: D-alanine--D-alanine ligase (308 aa).

The region spanning 103 to 302 (KTVMKTAGVP…FDELVQWMVE (200 aa)) is the ATP-grasp domain. ATP is bound at residue 130 to 184 (MEPPYVIKPVADGSSVGVYIITEQHQHPPQELFRDDWAYGDKLLVEKYVAGKELT). The Mg(2+) site is built by Asp-252, Glu-269, and Asn-271.

It belongs to the D-alanine--D-alanine ligase family. Mg(2+) is required as a cofactor. Requires Mn(2+) as cofactor.

The protein localises to the cytoplasm. It carries out the reaction 2 D-alanine + ATP = D-alanyl-D-alanine + ADP + phosphate + H(+). It functions in the pathway cell wall biogenesis; peptidoglycan biosynthesis. Functionally, cell wall formation. This chain is D-alanine--D-alanine ligase, found in Rhodopseudomonas palustris (strain BisA53).